A 161-amino-acid polypeptide reads, in one-letter code: 2-C-methyl-D-erythritol 2,4-cyclodiphosphate synthase (161 aa).

Residues aspartate 10 and histidine 12 each coordinate a divalent metal cation. 4-CDP-2-C-methyl-D-erythritol 2-phosphate contacts are provided by residues 10-12 (DVH) and 36-37 (HS). Residue histidine 44 coordinates a divalent metal cation. 4-CDP-2-C-methyl-D-erythritol 2-phosphate contacts are provided by residues 58-60 (DIG), 63-67 (FSDTD), and arginine 144.

This sequence belongs to the IspF family. In terms of assembly, homotrimer. Requires a divalent metal cation as cofactor.

It catalyses the reaction 4-CDP-2-C-methyl-D-erythritol 2-phosphate = 2-C-methyl-D-erythritol 2,4-cyclic diphosphate + CMP. It functions in the pathway isoprenoid biosynthesis; isopentenyl diphosphate biosynthesis via DXP pathway; isopentenyl diphosphate from 1-deoxy-D-xylulose 5-phosphate: step 4/6. Involved in the biosynthesis of isopentenyl diphosphate (IPP) and dimethylallyl diphosphate (DMAPP), two major building blocks of isoprenoid compounds. Catalyzes the conversion of 4-diphosphocytidyl-2-C-methyl-D-erythritol 2-phosphate (CDP-ME2P) to 2-C-methyl-D-erythritol 2,4-cyclodiphosphate (ME-CPP) with a corresponding release of cytidine 5-monophosphate (CMP). This is 2-C-methyl-D-erythritol 2,4-cyclodiphosphate synthase from Burkholderia cenocepacia (strain HI2424).